A 641-amino-acid polypeptide reads, in one-letter code: FACT complex subunit SSRP1-A (641 aa).

Residues 459 to 561 (TDDDAVDPHL…DPNAPKRAMT (103 aa)) are disordered. Over residues 476–487 (GDEESDEEDEDF) the composition is skewed to acidic residues. Basic and acidic residues predominate over residues 512–524 (GGEKEKLSKKEAS). A DNA-binding region (HMG box) is located at residues 556 to 624 (PKRAMTPFMY…RYEKESAVYR (69 aa)).

This sequence belongs to the SSRP1 family. In terms of assembly, component of the FACT complex, a stable heterodimer of SPT16 and SSRP1.

Its subcellular location is the nucleus. It is found in the chromosome. Component of the FACT complex, a general chromatin factor that acts to reorganize nucleosomes. The FACT complex is involved in multiple processes that require DNA as a template such as mRNA elongation, DNA replication and DNA repair. During transcription elongation the FACT complex acts as a histone chaperone that both destabilizes and restores nucleosomal structure. It facilitates the passage of RNA polymerase II and transcription by promoting the dissociation of one histone H2A-H2B dimer from the nucleosome, then subsequently promotes the reestablishment of the nucleosome following the passage of RNA polymerase II. Binds specifically to double-stranded DNA. This is FACT complex subunit SSRP1-A (SSRP1-A) from Oryza sativa subsp. japonica (Rice).